Here is a 366-residue protein sequence, read N- to C-terminus: Carboxy-cis,cis-muconate cyclase (366 aa).

Residues His-149, Arg-197, Glu-213, and Arg-275 contribute to the active site.

This sequence belongs to the cycloisomerase 2 family. Homotetramer.

The enzyme catalyses 3-carboxy-2,5-dihydro-5-oxofuran-2-acetate = 3-carboxy-cis,cis-muconate. Its pathway is aromatic compound metabolism; beta-ketoadipate pathway; 3-carboxy-cis,cis-muconate from 3-carboxy-2,5-dihydro-5-oxofuran-2-acetate: step 1/1. In terms of biological role, catalyzes a syn cycloisomerization. Also possesses mle activity. The chain is Carboxy-cis,cis-muconate cyclase from Neurospora crassa (strain ATCC 24698 / 74-OR23-1A / CBS 708.71 / DSM 1257 / FGSC 987).